The chain runs to 113 residues: UPF0482 protein CKO_01577 (113 aa).

A signal peptide spans 1–28 (MNNTLSKRLCLTAMLALGAVVYTTSAFA). The interval 44–67 (RQHAAMEKEQWNDTRSLRQKVNTR) is disordered. Basic and acidic residues predominate over residues 47–59 (AAMEKEQWNDTRS).

Belongs to the UPF0482 family.

The protein is UPF0482 protein CKO_01577 of Citrobacter koseri (strain ATCC BAA-895 / CDC 4225-83 / SGSC4696).